Consider the following 205-residue polypeptide: Small ribosomal subunit protein uS4c (205 aa).

Positions 93 to 156 (MRLDNTVFRL…KSRNLVLNNL (64 aa)) constitute an S4 RNA-binding domain.

Belongs to the universal ribosomal protein uS4 family. In terms of assembly, part of the 30S ribosomal subunit. Contacts protein S5. The interaction surface between S4 and S5 is involved in control of translational fidelity.

Its subcellular location is the plastid. It is found in the chloroplast. In terms of biological role, one of the primary rRNA binding proteins, it binds directly to 16S rRNA where it nucleates assembly of the body of the 30S subunit. Functionally, with S5 and S12 plays an important role in translational accuracy. This is Small ribosomal subunit protein uS4c (rps4) from Mesostigma viride (Green alga).